The chain runs to 208 residues: MELKVLNTGGSETGEVVTLNDAVFSAEVSEHAMYLDVKSIMANRRQGTHKAKNRSEVRGGGRKPYRQKGTGHARQGSTRSPLMTGGGTIFGPEPRDYGLKVNKKVKKLARRSALTNKANEGGIVVVEDFVFDQIKTRQMAEVLKNLGLDSRKTLMLMPEHNDIIVRSGRNIPKLQVVVADNASTYDILDSQTVLVQKTALKKIEETLG.

Positions 44–89 (RRQGTHKAKNRSEVRGGGRKPYRQKGTGHARQGSTRSPLMTGGGTI) are disordered. Positions 60–71 (GGRKPYRQKGTG) are enriched in basic residues.

This sequence belongs to the universal ribosomal protein uL4 family. In terms of assembly, part of the 50S ribosomal subunit.

Functionally, one of the primary rRNA binding proteins, this protein initially binds near the 5'-end of the 23S rRNA. It is important during the early stages of 50S assembly. It makes multiple contacts with different domains of the 23S rRNA in the assembled 50S subunit and ribosome. In terms of biological role, forms part of the polypeptide exit tunnel. The sequence is that of Large ribosomal subunit protein uL4 from Chlorobium phaeobacteroides (strain BS1).